The sequence spans 54 residues: Lectin alpha-1 chain (54 aa).

The protein belongs to the leguminous lectin family. As to quaternary structure, tetramer of two alpha and two beta chains.

The chain is Lectin alpha-1 chain from Lathyrus cicera (Flat-pod pea).